A 287-amino-acid chain; its full sequence is Phosphatidylserine decarboxylase proenzyme (287 aa).

Residues aspartate 86, histidine 143, and serine 250 each act as charge relay system; for autoendoproteolytic cleavage activity in the active site. The active-site Schiff-base intermediate with substrate; via pyruvic acid; for decarboxylase activity is the serine 250. Pyruvic acid (Ser); by autocatalysis is present on serine 250.

The protein belongs to the phosphatidylserine decarboxylase family. PSD-B subfamily. Prokaryotic type I sub-subfamily. As to quaternary structure, heterodimer of a large membrane-associated beta subunit and a small pyruvoyl-containing alpha subunit. Pyruvate serves as cofactor. Is synthesized initially as an inactive proenzyme. Formation of the active enzyme involves a self-maturation process in which the active site pyruvoyl group is generated from an internal serine residue via an autocatalytic post-translational modification. Two non-identical subunits are generated from the proenzyme in this reaction, and the pyruvate is formed at the N-terminus of the alpha chain, which is derived from the carboxyl end of the proenzyme. The autoendoproteolytic cleavage occurs by a canonical serine protease mechanism, in which the side chain hydroxyl group of the serine supplies its oxygen atom to form the C-terminus of the beta chain, while the remainder of the serine residue undergoes an oxidative deamination to produce ammonia and the pyruvoyl prosthetic group on the alpha chain. During this reaction, the Ser that is part of the protease active site of the proenzyme becomes the pyruvoyl prosthetic group, which constitutes an essential element of the active site of the mature decarboxylase.

It is found in the cell membrane. It carries out the reaction a 1,2-diacyl-sn-glycero-3-phospho-L-serine + H(+) = a 1,2-diacyl-sn-glycero-3-phosphoethanolamine + CO2. The protein operates within phospholipid metabolism; phosphatidylethanolamine biosynthesis; phosphatidylethanolamine from CDP-diacylglycerol: step 2/2. Functionally, catalyzes the formation of phosphatidylethanolamine (PtdEtn) from phosphatidylserine (PtdSer). The polypeptide is Phosphatidylserine decarboxylase proenzyme (Wigglesworthia glossinidia brevipalpis).